Here is a 140-residue protein sequence, read N- to C-terminus: Probable deoxyuridine 5'-triphosphate nucleotidohydrolase (140 aa).

Residues 62 to 64 (RSG), 76 to 79 (GVID), arginine 130, and 135 to 136 (FG) each bind substrate.

Belongs to the dUTPase family. In terms of assembly, homotrimer. It depends on Mg(2+) as a cofactor.

The catalysed reaction is dUTP + H2O = dUMP + diphosphate + H(+). Its pathway is pyrimidine metabolism; dUMP biosynthesis; dUMP from dCTP (dUTP route): step 2/2. In terms of biological role, this enzyme is involved in nucleotide metabolism: it produces dUMP, the immediate precursor of thymidine nucleotides and it decreases the intracellular concentration of dUTP so that uracil cannot be incorporated into DNA. The polypeptide is Probable deoxyuridine 5'-triphosphate nucleotidohydrolase (Schizosaccharomyces pombe (strain 972 / ATCC 24843) (Fission yeast)).